We begin with the raw amino-acid sequence, 216 residues long: NKG2-D type II integral membrane protein (216 aa).

The Cytoplasmic portion of the chain corresponds to 1–51 (MGWIRGRRSRHSWEMSEFHNYNLDLAKNDFSTRWQKQRCPVIKSKCRENTS). A helical; Signal-anchor for type II membrane protein membrane pass occupies residues 52–72 (PLFFCCFIAVAMGIRFIVMVT). Over 73-216 (IWSAVFLNSL…NTYICMQRTV (144 aa)) the chain is Extracellular. 2 disulfides stabilise this stretch: C96–C105 and C99–C110. The C-type lectin domain occupies 98 to 213 (PCPKNWICYK…STPNTYICMQ (116 aa)). N-linked (GlcNAc...) asparagine glycosylation is found at N115, N131, N163, and N202. 2 disulfide bridges follow: C127/C211 and C189/C203.

In terms of assembly, homodimer; disulfide-linked. Heterohexamer composed of two subunits of KLRK1 and four subunits of HCST/DAP10. Interacts (via transmembrane domain) with HCST/DAP10 (via transmembrane domain); the interaction is required for KLRK1 NK cell surface and induces NK cell-mediated cytotoxicity. Can form disulfide-bonded heterodimer with CD94. Interacts with CEACAM1; recruits PTPN6 that dephosphorylates VAV1.

Its subcellular location is the cell membrane. Its function is as follows. Functions as an activating and costimulatory receptor involved in immunosurveillance upon binding to various cellular stress-inducible ligands displayed at the surface of autologous tumor cells and virus-infected cells. Provides both stimulatory and costimulatory innate immune responses on activated killer (NK) cells, leading to cytotoxic activity. Acts as a costimulatory receptor for T-cell receptor (TCR) in CD8(+) T-cell-mediated adaptive immune responses by amplifying T-cell activation. Stimulates perforin-mediated elimination of ligand-expressing tumor cells. Signaling involves calcium influx, culminating in the expression of TNF-alpha. Participates in NK cell-mediated bone marrow graft rejection. May play a regulatory role in differentiation and survival of NK cells. Binds to ligands belonging to various subfamilies of MHC class I-related glycoproteins. The sequence is that of NKG2-D type II integral membrane protein (KLRK1) from Pongo pygmaeus (Bornean orangutan).